The following is a 347-amino-acid chain: MLKFIQNNREATALLAIVCLFVFPGALDSQYLSVQTLTMVFSSAQILMLLAIGATMVMLTRNIDVSVGSTTGMCAVLLGVMLNAGYSLPVACLATLILGIVAGFFNGVLVAWLKIPAIVATLGTLGLYRGIMLLWTGGKWIEGLPAGLKQLSAPVFLGISAIGWFTLVLALLMAWLLAKTAFGRNFYATGDNLQGARQLGVRTEMVRIMAFSLNGGMAALAGIVFASQIGFIPNQTGTGLEMKAIAACVLGGISLLGGSGTVIGAILGAYFLTQIDSVLVLLRIPAWWNDFIAGLVLLGVLVFDGRLRCALQRNLRRQKYARFISPPTPLQTEAKTHAQQNKNKEVA.

The next 9 membrane-spanning stretches (helical) occupy residues 14–34 (LLAIVCLFVFPGALDSQYLSV), 39–59 (MVFSSAQILMLLAIGATMVML), 72–92 (GMCAVLLGVMLNAGYSLPVAC), 93–113 (LATLILGIVAGFFNGVLVAWL), 115–135 (IPAIVATLGTLGLYRGIMLLW), 155–175 (VFLGISAIGWFTLVLALLMAW), 213–233 (LNGGMAALAGIVFASQIGFIP), 249–269 (VLGGISLLGGSGTVIGAILGA), and 284–304 (IPAWWNDFIAGLVLLGVLVFD).

It belongs to the binding-protein-dependent transport system permease family. AraH/RbsC subfamily. In terms of assembly, the complex is composed of two ATP-binding proteins (LsrA), two transmembrane proteins (LsrC and LsrD) and a solute-binding protein (LsrB).

Its subcellular location is the cell inner membrane. In terms of biological role, part of the ABC transporter complex LsrABCD involved in autoinducer 2 (AI-2) import. Probably responsible for the translocation of the substrate across the membrane. The polypeptide is Autoinducer 2 import system permease protein LsrC (lsrC) (Salmonella paratyphi A (strain ATCC 9150 / SARB42)).